A 102-amino-acid chain; its full sequence is Small ribosomal subunit protein uS10 (102 aa).

Belongs to the universal ribosomal protein uS10 family. Part of the 30S ribosomal subunit.

In terms of biological role, involved in the binding of tRNA to the ribosomes. This Roseiflexus castenholzii (strain DSM 13941 / HLO8) protein is Small ribosomal subunit protein uS10.